The sequence spans 262 residues: MIDKSVFIHPTAIVEDGAVIGANAHIGPFCIVGPQVEIGEGTVLKSHVVVNGQTKIGRDNEIYQFASIGEVNQDLKYAGEPTRVEIGDRNRIRESVTIHRGTVQGGGLTKVGSDNLLMINAHVAHDCTVGNRCILANNATLAGHVSVDDFAIIGGMTAVHQFCIIGAHVMVGGCSGVAQDVPPYVIAQGNHATPFGVNIEGLKRRGFSREGLVAIRNAYKLLYRSGKTLDEAKLEIAELAEKHPEVKAFTEFFERSTRGPIR.

It belongs to the transferase hexapeptide repeat family. LpxA subfamily. In terms of assembly, homotrimer.

The protein localises to the cytoplasm. The enzyme catalyses a (3R)-hydroxyacyl-[ACP] + UDP-N-acetyl-alpha-D-glucosamine = a UDP-3-O-[(3R)-3-hydroxyacyl]-N-acetyl-alpha-D-glucosamine + holo-[ACP]. It participates in glycolipid biosynthesis; lipid IV(A) biosynthesis; lipid IV(A) from (3R)-3-hydroxytetradecanoyl-[acyl-carrier-protein] and UDP-N-acetyl-alpha-D-glucosamine: step 1/6. Involved in the biosynthesis of lipid A, a phosphorylated glycolipid that anchors the lipopolysaccharide to the outer membrane of the cell. The polypeptide is Acyl-[acyl-carrier-protein]--UDP-N-acetylglucosamine O-acyltransferase (Salmonella typhi).